We begin with the raw amino-acid sequence, 66 residues long: Prokaryotic ubiquitin-like protein UBact (66 aa).

The disordered stretch occupies residues 1–66 (MNMRYTLMPE…AERYRQRTGE (66 aa)). The segment covering 30–66 (GGPRRPETGSPDKDNLLKRMRKVDPKQAERYRQRTGE) has biased composition (basic and acidic residues). Residue E66 forms an Isoglutamyl lysine isopeptide (Glu-Lys) (interchain with K-? in acceptor proteins) linkage.

This sequence belongs to the ubiquitin-like protein UBact family.

Functionally, may function as a protein modifier covalently attached to lysine residues of substrate proteins. This may serve to target the modified proteins for degradation by proteasomes. The sequence is that of Prokaryotic ubiquitin-like protein UBact from Nitrospira moscoviensis.